The following is an 80-amino-acid chain: D-alanyl carrier protein 1 (80 aa).

A Carrier domain is found at 1–80 (MTMDDTKATV…KIVAKVENLQ (80 aa)). At Ser38 the chain carries O-(pantetheine 4'-phosphoryl)serine.

It belongs to the DltC family. 4'-phosphopantetheine is transferred from CoA to a specific serine of apo-DCP.

The protein resides in the cytoplasm. It functions in the pathway cell wall biogenesis; lipoteichoic acid biosynthesis. Carrier protein involved in the D-alanylation of lipoteichoic acid (LTA). The loading of thioester-linked D-alanine onto DltC is catalyzed by D-alanine--D-alanyl carrier protein ligase DltA. The DltC-carried D-alanyl group is further transferred to cell membrane phosphatidylglycerol (PG) by forming an ester bond, probably catalyzed by DltD. D-alanylation of LTA plays an important role in modulating the properties of the cell wall in Gram-positive bacteria, influencing the net charge of the cell wall. The sequence is that of D-alanyl carrier protein 1 from Lactiplantibacillus plantarum (strain ATCC BAA-793 / NCIMB 8826 / WCFS1) (Lactobacillus plantarum).